The chain runs to 468 residues: MGGRREAIERELKKLRAEREELDGRIRLLESQLEAGPAGFNGAAAGKGVGDDACGGSGACQSRVGNEFAPDGSLPADMIYRYSRHLLLPDFGVEGQRKLSQSSILVVGAGGLGSPLALYLAACGVGRLGIVDGDDVELNNLHRQIIHKEAYVGQSKVKSAADACREINSSIKVVEYHHTLKPCNALEVARKYDIVVDATDNLPTRYMISDCCVLLNKPLVSGAALGLEGQLTVYHHNGSPCYRCLFPTPPPVAACQRCSDSGVLGVVPGVIGCLQALEAIKVATGVGEPLCGRMLLFDALSARIRVVKLRGSSPDCTHCGENSVFTEEDFQKFDYESFTQSPMSDKAAPSVNVLPESARITCREYKKLADDGEPHLLLDVRPAHHFQIASISPSHNIPLSMLEEKLPALEASLKEAGEGSALVVLCRRGNDSQRAVQLLREKGFTSAKDIIGGLQAWGRDVDPDFPVY.

ATP-binding positions include Gly111, Asp132, 139–143, Lys156, and 200–201; these read NNLHR and DN. 2 residues coordinate Zn(2+): Cys241 and Cys244. Cys258 (glycyl thioester intermediate; for adenylyltransferase activity) is an active-site residue. The Zn(2+) site is built by Cys316 and Cys319. The region spanning 371–466 is the Rhodanese domain; it reads DGEPHLLLDV…WGRDVDPDFP (96 aa). Cys426 functions as the Cysteine persulfide intermediate; for sulfurtransferase activity in the catalytic mechanism.

It in the N-terminal section; belongs to the HesA/MoeB/ThiF family. UBA4 subfamily. Zn(2+) serves as cofactor.

It is found in the cytoplasm. The catalysed reaction is [molybdopterin-synthase sulfur-carrier protein]-C-terminal Gly-Gly + ATP + H(+) = [molybdopterin-synthase sulfur-carrier protein]-C-terminal Gly-Gly-AMP + diphosphate. It catalyses the reaction [molybdopterin-synthase sulfur-carrier protein]-C-terminal Gly-Gly-AMP + S-sulfanyl-L-cysteinyl-[cysteine desulfurase] + AH2 = [molybdopterin-synthase sulfur-carrier protein]-C-terminal-Gly-aminoethanethioate + L-cysteinyl-[cysteine desulfurase] + A + AMP + 2 H(+). It participates in tRNA modification; 5-methoxycarbonylmethyl-2-thiouridine-tRNA biosynthesis. The protein operates within cofactor biosynthesis; molybdopterin biosynthesis. Its function is as follows. Plays a central role in 2-thiolation of mcm(5)S(2)U at tRNA wobble positions of cytosolic tRNA(Lys), tRNA(Glu) and tRNA(Gln). Also essential during biosynthesis of the molybdenum cofactor. Acts by mediating the C-terminal thiocarboxylation of sulfur carriers URM1 and MOCS2A. Its N-terminus first activates URM1 and MOCS2A as acyl-adenylates (-COAMP), then the persulfide sulfur on the catalytic cysteine is transferred to URM1 and MOCS2A to form thiocarboxylation (-COSH) of their C-terminus. The reaction probably involves hydrogen sulfide that is generated from the persulfide intermediate and that acts as a nucleophile towards URM1 and MOCS2A. Subsequently, a transient disulfide bond is formed. Does not use thiosulfate as sulfur donor; NFS1 probably acting as a sulfur donor for thiocarboxylation reactions. This chain is Adenylyltransferase and sulfurtransferase MOCS3-1, found in Zea mays (Maize).